A 117-amino-acid polypeptide reads, in one-letter code: Small ribosomal subunit protein eS25 (117 aa).

A disordered region spans residues 1–34; that stretch reads MPPKKDPKGGKAPPSKKKEGSGGGKAKKKKWSKG. Residues 25-34 are compositionally biased toward basic residues; the sequence is KAKKKKWSKG.

The protein belongs to the eukaryotic ribosomal protein eS25 family.

The protein is Small ribosomal subunit protein eS25 (rps-25) of Caenorhabditis elegans.